Reading from the N-terminus, the 129-residue chain is Glycine cleavage system H protein (129 aa).

Residues 24–106 enclose the Lipoyl-binding domain; it reads TYTVGITEHA…YAGGWIFKIK (83 aa). Lys65 is modified (N6-lipoyllysine).

The protein belongs to the GcvH family. The glycine cleavage system is composed of four proteins: P, T, L and H. (R)-lipoate is required as a cofactor.

Its function is as follows. The glycine cleavage system catalyzes the degradation of glycine. The H protein shuttles the methylamine group of glycine from the P protein to the T protein. This Escherichia coli O139:H28 (strain E24377A / ETEC) protein is Glycine cleavage system H protein.